The primary structure comprises 1403 residues: Protein FAM135B (1403 aa).

Disordered stretches follow at residues 445-483 (EKNL…EVQE), 514-548 (EDEC…GQTP), 648-669 (REAL…DLSA), and 718-740 (RHAH…LPSG). Residues 649 to 661 (EALDTKPSQPDHA) show a composition bias toward basic and acidic residues. The segment covering 731–740 (TESNTSLPSG) has biased composition (polar residues). Phosphoserine occurs at positions 775 and 776. The tract at residues 790 to 819 (TAGFSEDLDPSSKENSPPRHTSLSYGGSRV) is disordered. The span at 802–814 (KENSPPRHTSLSY) shows a compositional bias: polar residues.

Belongs to the FAM135 family.

This chain is Protein FAM135B (Fam135b), found in Mus musculus (Mouse).